The sequence spans 122 residues: Small ribosomal subunit protein uS13 (122 aa).

A disordered region spans residues 99 to 122; the sequence is RGQRTHTNARTRKGPAKAIAGKKK.

It belongs to the universal ribosomal protein uS13 family. As to quaternary structure, part of the 30S ribosomal subunit. Forms a loose heterodimer with protein S19. Forms two bridges to the 50S subunit in the 70S ribosome.

Functionally, located at the top of the head of the 30S subunit, it contacts several helices of the 16S rRNA. In the 70S ribosome it contacts the 23S rRNA (bridge B1a) and protein L5 of the 50S subunit (bridge B1b), connecting the 2 subunits; these bridges are implicated in subunit movement. Contacts the tRNAs in the A and P-sites. This is Small ribosomal subunit protein uS13 from Rhizobium leguminosarum bv. trifolii (strain WSM2304).